The sequence spans 97 residues: Large ribosomal subunit protein bL27 (97 aa).

A propeptide spanning residues Met-1–Met-12 is cleaved from the precursor. A disordered region spans residues Lys-15–Ala-37.

This sequence belongs to the bacterial ribosomal protein bL27 family. The N-terminus is cleaved by ribosomal processing cysteine protease Prp.

This chain is Large ribosomal subunit protein bL27, found in Streptococcus suis (strain 98HAH33).